Consider the following 339-residue polypeptide: Anthranilate phosphoribosyltransferase (339 aa).

5-phospho-alpha-D-ribose 1-diphosphate contacts are provided by residues Gly79, 82–83 (GD), Thr87, 89–92 (NVST), 107–115 (KHGNRAVSS), and Ser119. Position 79 (Gly79) interacts with anthranilate. Ser91 is a binding site for Mg(2+). Asn110 provides a ligand contact to anthranilate. Anthranilate is bound at residue Arg165. Mg(2+) contacts are provided by Asp224 and Glu225.

It belongs to the anthranilate phosphoribosyltransferase family. Homodimer. The cofactor is Mg(2+).

The enzyme catalyses N-(5-phospho-beta-D-ribosyl)anthranilate + diphosphate = 5-phospho-alpha-D-ribose 1-diphosphate + anthranilate. It participates in amino-acid biosynthesis; L-tryptophan biosynthesis; L-tryptophan from chorismate: step 2/5. Its function is as follows. Catalyzes the transfer of the phosphoribosyl group of 5-phosphorylribose-1-pyrophosphate (PRPP) to anthranilate to yield N-(5'-phosphoribosyl)-anthranilate (PRA). The polypeptide is Anthranilate phosphoribosyltransferase (Geobacillus stearothermophilus (Bacillus stearothermophilus)).